The primary structure comprises 119 residues: Large ribosomal subunit protein bL20 (119 aa).

It belongs to the bacterial ribosomal protein bL20 family.

Functionally, binds directly to 23S ribosomal RNA and is necessary for the in vitro assembly process of the 50S ribosomal subunit. It is not involved in the protein synthesizing functions of that subunit. This chain is Large ribosomal subunit protein bL20, found in Streptococcus agalactiae serotype Ia (strain ATCC 27591 / A909 / CDC SS700).